The primary structure comprises 563 residues: Germacrene C/D synthase (563 aa).

The segment at Met1–Arg22 is disordered. Residues Asp315, Asp319, and Glu468 each contribute to the Mg(2+) site. The DDXXD motif motif lies at Asp315–Asp319.

It belongs to the terpene synthase family. Mg(2+) serves as cofactor. Predominantly expressed in root.

The enzyme catalyses (2E,6E)-farnesyl diphosphate = germacrene C + diphosphate. It carries out the reaction (2E,6E)-farnesyl diphosphate = (-)-germacrene D + diphosphate. In terms of biological role, mediates formation of germacrene C and germacrene D using farnesyl diphosphate as substrate. Can also catalyze formation of trace of germacrene B. The chain is Germacrene C/D synthase (TPS1) from Valeriana officinalis (Valerian).